Here is a 170-residue protein sequence, read N- to C-terminus: Adenine phosphoribosyltransferase (170 aa).

Belongs to the purine/pyrimidine phosphoribosyltransferase family. Homodimer.

The protein resides in the cytoplasm. The enzyme catalyses AMP + diphosphate = 5-phospho-alpha-D-ribose 1-diphosphate + adenine. Its pathway is purine metabolism; AMP biosynthesis via salvage pathway; AMP from adenine: step 1/1. Catalyzes a salvage reaction resulting in the formation of AMP, that is energically less costly than de novo synthesis. The polypeptide is Adenine phosphoribosyltransferase (Cenarchaeum symbiosum (strain A)).